Reading from the N-terminus, the 871-residue chain is Dual O-methyltransferase/FAD-dependent monooxygenase CTB3 (871 aa).

The tract at residues Met1–Gln429 is O-methyltransferase. An S-adenosyl-L-methionine-binding site is contributed by Asp279. Catalysis depends on His331, which acts as the Proton acceptor. The tract at residues Thr430–Phe871 is FAD-dependent monooxygenase. The FAD site is built by Glu485, Arg569, Asp793, and Ala806.

The protein in the C-terminal section; belongs to the paxM FAD-dependent monooxygenase family. It in the N-terminal section; belongs to the class I-like SAM-binding methyltransferase superfamily. Cation-independent O-methyltransferase family. COMT subfamily.

The enzyme catalyses nor-toralactone + S-adenosyl-L-methionine = toralactone + S-adenosyl-L-homocysteine + H(+). The catalysed reaction is toralactone + NADH + O2 + H(+) = 1-(3,4,5-trihydroxy-7-methoxynaphthalen-2-yl)propan-2-one + CO2 + NAD(+). It functions in the pathway mycotoxin biosynthesis. Dual O-methyltransferase/FAD-dependent monooxygenase; part of the gene cluster that mediates the biosynthesis of cercosporin, a light-activated, non-host-selective toxin. The perylenequinone chromophore of cercosporin absorbs light energy to attain an electronically-activated triplet state and produces active oxygen species such as the hydroxyl radical, superoxide, hydrogen peroxide or singlet oxygen upon reaction with oxygen molecules. These reactive oxygen species cause damage to various cellular components including lipids, proteins and nucleic acids. The first step of cercosporin biosynthesis is performed by the polyketide synthase CTB1 which catalyzes the formation of nor-toralactone. The starter unit acyltransferase (SAT) domain of CTB1 initiates polyketide extension by the selective utilization of acetyl-CoA, which is elongated to the heptaketide in the beta-ketoacyl synthase (KS) domain by successive condensations with six malonyl units introduced by the malonyl acyltransferase (MAT) domain. The product template (PT) domain catalyzes C4-C9 and C2-C11 aldol cyclizations and dehydrations to a trihydroxynaphthalene, which is thought to be delivered to the thioesterase (TE) domain for product release. The bifunctional enzyme CTB3 then methylates nor-toralactone to toralactone before conducting an unusual oxidative aromatic ring opening. The O-methyltransferase CTB2 further methylates the nascent OH-6 of the CBT3 product, blocking further oxidation at this site before the reductase CTB6 reduces the 2-oxopropyl ketone at position C7, giving naphthalene. The FAD-dependent monooxygenase CTB5 in concert with the multicopper oxidase CTB12 are responsible for homodimerization of naphthalene with CTB7 installing the dioxepine moiety, finally producing cercosporin. The fasciclin domain-containing protein CTB11 might act with CTB5 and CTB12 whereas the roles of CTB9 and CTB10 have still to be elucidated. The protein is Dual O-methyltransferase/FAD-dependent monooxygenase CTB3 of Cercospora beticola (Sugarbeet leaf spot fungus).